The following is a 298-amino-acid chain: MGGISAASVRGWLRHHVVMASHTSWRVGGPAQRLYRPADRDDLIAFLRFLPRNEPLLWLGLGSNLLVRDGGISGTVIAIAGVLNRIERRTDTTVWVEAGVSCAKLAKFCAREGLRGAEFLAGIPGTVGGALAMNAGAFGGTMWELVTAVEVAGIGGEHCRRLPQEYQVSYREVHGPEREWFLAAELRLTLGNSQVAQQQIRRLLRQRNGCQPIRQPCAGSVFRNPWNDKAGRLIEACGLKGASIGGARVSERHANFIVNTGNASAADVEHLIQWVAETVARQAGVSLVPEVHMVGEPA.

The 180-residue stretch at 27 to 206 (VGGPAQRLYR…QQQIRRLLRQ (180 aa)) folds into the FAD-binding PCMH-type domain. The active site involves arginine 171. The active-site Proton donor is the serine 220. The active site involves glutamate 290.

This sequence belongs to the MurB family. Requires FAD as cofactor.

It is found in the cytoplasm. It carries out the reaction UDP-N-acetyl-alpha-D-muramate + NADP(+) = UDP-N-acetyl-3-O-(1-carboxyvinyl)-alpha-D-glucosamine + NADPH + H(+). It functions in the pathway cell wall biogenesis; peptidoglycan biosynthesis. Its function is as follows. Cell wall formation. In Nitrosococcus oceani (strain ATCC 19707 / BCRC 17464 / JCM 30415 / NCIMB 11848 / C-107), this protein is UDP-N-acetylenolpyruvoylglucosamine reductase.